Here is a 263-residue protein sequence, read N- to C-terminus: Pheophorbidase (263 aa).

One can recognise an AB hydrolase-1 domain in the interval 13–244 (HFVFVHGASH…LEESDHSAFF (232 aa)). Ser-88 (acyl-ester intermediate) is an active-site residue. Catalysis depends on charge relay system residues Asp-212 and His-240.

This sequence belongs to the AB hydrolase superfamily. As to quaternary structure, homodimer.

It is found in the cytoplasm. The catalysed reaction is pheophorbide a + H2O + H(+) = pyropheophorbide a + methanol + CO2. With respect to regulation, inhibited by methanol and phenylmethylsulfonicfluoride (PMSF). In terms of biological role, involved in chlorophyll degradation. Specific for the pheophorbides of the dihydroporphyrin and tetrahydroporphyrin types. Chlorophyllide a, pheophytin a and the nonfluorescent chlorophyll catabolite (NCC) are not used as substrates. This Raphanus sativus (Radish) protein is Pheophorbidase (PPD).